The chain runs to 411 residues: Intracellular hyaluronan-binding protein 4 (411 aa).

Phosphoserine is present on residues serine 7 and serine 36. A coiled-coil region spans residues 42-62 (LREAEHRRQQQLQRKRRDEAA). The tract at residues 42–271 (LREAEHRRQQ…ECQGTLDEES (230 aa)) is disordered. An Omega-N-methylarginine modification is found at arginine 70. At serine 74 the chain carries Phosphoserine. Residues 87–97 (GRRESQKERKS) show a composition bias toward basic and acidic residues. At serine 108 the chain carries Phosphoserine. Composition is skewed to basic and acidic residues over residues 138–181 (VLER…DRPL) and 205–229 (DSFD…RMED). Glycyl lysine isopeptide (Lys-Gly) (interchain with G-Cter in SUMO1); alternate cross-links involve residues lysine 212 and lysine 274. Glycyl lysine isopeptide (Lys-Gly) (interchain with G-Cter in SUMO2); alternate cross-links involve residues lysine 212 and lysine 274. A coiled-coil region spans residues 279-301 (EVEEENQVQEMTLDEWKNLQEQT). The segment covering 296–313 (NLQEQTRPKPEFNIRKPE) has biased composition (basic and acidic residues). The segment at 296–318 (NLQEQTRPKPEFNIRKPESTVPS) is disordered. Residue lysine 334 forms a Glycyl lysine isopeptide (Lys-Gly) (interchain with G-Cter in SUMO1); alternate linkage. Residue lysine 334 forms a Glycyl lysine isopeptide (Lys-Gly) (interchain with G-Cter in SUMO2); alternate linkage. Phosphothreonine; by PKC occurs at positions 352 and 373. The interval 358-411 (NFGNLPRPGRGARGSTRGGRGRMRRTENYGPRAEVVTQDVAPNPDDPEDFPALA) is disordered. Residues 402 to 411 (DDPEDFPALA) show a composition bias toward acidic residues.

It belongs to the SERBP1-HABP4 family. As to quaternary structure, associates with ribosomes; promoting ribosome stabilization. Interacts with EEF2/eEF2; promoting ribosome stabilization. Interacts with FMR1. Interacts with FXR1 and FXR2. Interacts with CHD3 (via C-terminus). Interacts (via C-terminus) with RACK1. Interacts with p53/TP53. Interacts (via N-terminus) with SRSF9; this interaction is direct. Interacts with SYNCRIP; this interaction is direct. Interacts with MEF2C (via N-terminus); this interaction decreases DNA-binding activity of MEF2C in myocardial cells in response to mechanical stress. Interacts with PRMT1 (via N-terminus). Interacts with SPIN1. Post-translationally, phosphorylated by phorbol 12-myristate 13-acetate (PMA)-activated PKC isoforms at Thr-352 and Thr-373. Methylated. Methylation is decreased by phorbol 12-myristate 13-acetate (PMA)-activated PKC, in vitro. In terms of tissue distribution, expressed in adult heart, brain, liver, kidney, testis, and in various embryonic tissues, but not in adult spleen, lung or skeletal muscle.

The protein resides in the nucleus. It is found in the cytoplasm. The protein localises to the stress granule. It localises to the sarcoplasm. Its subcellular location is the nuclear body. The protein resides in the nucleolus. It is found in the nucleus speckle. The protein localises to the cajal body. It localises to the gem. In terms of biological role, ribosome-binding protein that promotes ribosome hibernation, a process during which ribosomes are stabilized in an inactive state and preserved from proteasomal degradation. Acts via its association with EEF2/eEF2 factor at the A-site of the ribosome, promoting ribosome stabilization in an inactive state compatible with storage. Plays a key role in ribosome hibernation in the mature oocyte by promoting ribosome stabilization. Ribosomes, which are produced in large quantities during oogenesis, are stored and translationally repressed in the oocyte and early embryo. Also binds RNA, regulating transcription and pre-mRNA splicing. Binds (via C-terminus) to poly(U) RNA. Seems to play a role in PML-nuclear bodies formation. Negatively regulates DNA-binding activity of the transcription factor MEF2C in myocardial cells in response to mechanical stress. The sequence is that of Intracellular hyaluronan-binding protein 4 from Mus musculus (Mouse).